The chain runs to 203 residues: Small ribosomal subunit protein uS4c (203 aa).

Residues 18 to 42 (LPGLTSKRPKNRKDSMNMNRSSSRK) form a disordered region. Positions 33-42 (MNMNRSSSRK) are enriched in polar residues. Residues 91 to 152 (MRLDNIIFRL…QPRLRAIIKK (62 aa)) form the S4 RNA-binding domain.

This sequence belongs to the universal ribosomal protein uS4 family. Part of the 30S ribosomal subunit. Contacts protein S5. The interaction surface between S4 and S5 is involved in control of translational fidelity.

Its subcellular location is the plastid. It localises to the chloroplast. In terms of biological role, one of the primary rRNA binding proteins, it binds directly to 16S rRNA where it nucleates assembly of the body of the 30S subunit. Functionally, with S5 and S12 plays an important role in translational accuracy. This Pinus koraiensis (Korean pine) protein is Small ribosomal subunit protein uS4c (rps4).